The chain runs to 256 residues: uncharacterized protein (256 aa).

A signal peptide spans 1–22 (MGYLKRFALYISVMILIFAIAG). A lipid anchor (N-palmitoyl cysteine) is attached at Cys-23. The S-diacylglycerol cysteine moiety is linked to residue Cys-23.

It belongs to the staphylococcal tandem lipoprotein family.

It is found in the cell membrane. This is an uncharacterized protein from Staphylococcus aureus (strain COL).